Here is a 252-residue protein sequence, read N- to C-terminus: Eukaryotic translation initiation factor 3 subunit K (252 aa).

Positions 46-225 (FDCYANLALL…VKVPTNKENE (180 aa)) constitute a PCI domain.

Belongs to the eIF-3 subunit K family. As to quaternary structure, component of the eukaryotic translation initiation factor 3 (eIF-3) complex.

The protein resides in the cytoplasm. Component of the eukaryotic translation initiation factor 3 (eIF-3) complex, which is involved in protein synthesis of a specialized repertoire of mRNAs and, together with other initiation factors, stimulates binding of mRNA and methionyl-tRNAi to the 40S ribosome. The eIF-3 complex specifically targets and initiates translation of a subset of mRNAs involved in cell proliferation. In Aspergillus terreus (strain NIH 2624 / FGSC A1156), this protein is Eukaryotic translation initiation factor 3 subunit K.